The following is a 238-amino-acid chain: Aspartate/glutamate leucyltransferase (238 aa).

This sequence belongs to the R-transferase family. Bpt subfamily.

Its subcellular location is the cytoplasm. The enzyme catalyses N-terminal L-glutamyl-[protein] + L-leucyl-tRNA(Leu) = N-terminal L-leucyl-L-glutamyl-[protein] + tRNA(Leu) + H(+). The catalysed reaction is N-terminal L-aspartyl-[protein] + L-leucyl-tRNA(Leu) = N-terminal L-leucyl-L-aspartyl-[protein] + tRNA(Leu) + H(+). Its function is as follows. Functions in the N-end rule pathway of protein degradation where it conjugates Leu from its aminoacyl-tRNA to the N-termini of proteins containing an N-terminal aspartate or glutamate. The protein is Aspartate/glutamate leucyltransferase of Shewanella sp. (strain ANA-3).